Reading from the N-terminus, the 437-residue chain is Carboxypeptidase A6 (437 aa).

The N-terminal stretch at 1–30 is a signal peptide; that stretch reads MKCLGKRRGQAAAFLPLCWLFLKILQPGHS. The propeptide at 31–129 is activation peptide; the sequence is HLYNNRYAGD…SSLHTQRNRR (99 aa). N89 and N153 each carry an N-linked (GlcNAc...) asparagine glycan. A Peptidase M14 domain is found at 138 to 432; it reads VYHSLEEIQN…LAVKNITMHL (295 aa). H196 and E199 together coordinate Zn(2+). Residues 196 to 199, R254, and 271 to 272 contribute to the substrate site; these read HARE and NR. A disulfide bridge links C265 with C288. H324 contributes to the Zn(2+) binding site. Residues 325 to 326 and Y376 each bind substrate; that span reads AY. E398 serves as the catalytic Proton donor/acceptor. A glycan (N-linked (GlcNAc...) asparagine) is linked at N427.

The protein belongs to the peptidase M14 family. It depends on Zn(2+) as a cofactor. In terms of tissue distribution, expressed in the hippocampus, nucleus raphe, and cortex.

Its subcellular location is the secreted. The protein localises to the extracellular space. It localises to the extracellular matrix. Its function is as follows. May be involved in the proteolytic inactivation of enkephalins and neurotensin in some brain areas. May convert inactive angiotensin I into the biologically active angiotensin II. Releases a C-terminal amino acid, with preference for large hydrophobic C-terminal amino acids and shows only very weak activity toward small amino acids and histidine. This chain is Carboxypeptidase A6 (CPA6), found in Homo sapiens (Human).